A 241-amino-acid chain; its full sequence is LexA repressor (241 aa).

The segment at residues 41 to 61 is a DNA-binding region (H-T-H motif); it reads FREIGNAAGLKSPSSVKHQLQ. Residues serine 165 and lysine 202 each act as for autocatalytic cleavage activity in the active site.

Belongs to the peptidase S24 family. As to quaternary structure, homodimer.

It catalyses the reaction Hydrolysis of Ala-|-Gly bond in repressor LexA.. In terms of biological role, represses a number of genes involved in the response to DNA damage (SOS response), including recA and lexA. In the presence of single-stranded DNA, RecA interacts with LexA causing an autocatalytic cleavage which disrupts the DNA-binding part of LexA, leading to derepression of the SOS regulon and eventually DNA repair. This chain is LexA repressor, found in Bifidobacterium longum (strain DJO10A).